Here is a 530-residue protein sequence, read N- to C-terminus: Ubiquitin carboxyl-terminal hydrolase 17-like protein 22 (530 aa).

The region spanning 80-375 is the USP domain; it reads AGLQNMGNTC…QAYVLFYIQK (296 aa). Catalysis depends on C89, which acts as the Nucleophile. The active-site Proton acceptor is H334. Basic and acidic residues-rich tracts occupy residues 382-392 and 398-412; these read SESVSRGREPR and DTDRRATQGELKRDH. 2 disordered regions span residues 382–412 and 476–530; these read SESVSRGREPRALGAEDTDRRATQGELKRDH and KNHH…LVCQ. The span at 484 to 495 shows a compositional bias: low complexity; sequence SSLLKLSSTTPT. The segment covering 496–505 has biased composition (polar residues); that stretch reads HQESMNTGTL. The span at 510 to 524 shows a compositional bias: basic residues; the sequence is GRARRSKGKNKHSKR.

It belongs to the peptidase C19 family. USP17 subfamily.

It is found in the nucleus. It localises to the endoplasmic reticulum. The enzyme catalyses Thiol-dependent hydrolysis of ester, thioester, amide, peptide and isopeptide bonds formed by the C-terminal Gly of ubiquitin (a 76-residue protein attached to proteins as an intracellular targeting signal).. Its function is as follows. Deubiquitinating enzyme that removes conjugated ubiquitin from specific proteins to regulate different cellular processes that may include cell proliferation, progression through the cell cycle, apoptosis, cell migration, and the cellular response to viral infection. The sequence is that of Ubiquitin carboxyl-terminal hydrolase 17-like protein 22 (USP17L22) from Homo sapiens (Human).